A 60-amino-acid polypeptide reads, in one-letter code: Ribosome biogenesis protein Nop10 (60 aa).

Residues 37–60 (APAPFDPADPHGKYRRALKERRRL) are disordered. Residues 49 to 60 (KYRRALKERRRL) are compositionally biased toward basic residues.

The protein belongs to the NOP10 family.

Functionally, involved in ribosome biogenesis; more specifically in 18S rRNA pseudouridylation and in cleavage of pre-rRNA. The protein is Ribosome biogenesis protein Nop10 of Halobacterium salinarum (strain ATCC 29341 / DSM 671 / R1).